The chain runs to 239 residues: Large ribosomal subunit protein uL2 (239 aa).

The tract at residues 200–239 (VNHPHGGKEHHIGRPSTVSRRAPPGRKVGHIAARRTGRRK) is disordered. Basic residues predominate over residues 222–239 (PPGRKVGHIAARRTGRRK).

It belongs to the universal ribosomal protein uL2 family. Part of the 50S ribosomal subunit. Forms a bridge to the 30S subunit in the 70S ribosome.

One of the primary rRNA binding proteins. Required for association of the 30S and 50S subunits to form the 70S ribosome, for tRNA binding and peptide bond formation. It has been suggested to have peptidyltransferase activity; this is somewhat controversial. Makes several contacts with the 16S rRNA in the 70S ribosome. The chain is Large ribosomal subunit protein uL2 from Thermococcus gammatolerans (strain DSM 15229 / JCM 11827 / EJ3).